We begin with the raw amino-acid sequence, 369 residues long: Phospho-N-acetylmuramoyl-pentapeptide-transferase (369 aa).

The next 10 helical transmembrane spans lie at 30–50 (AAAITSLLITILAGPKLIGYL), 73–93 (LPTMGGTLIIFSVVVSGLLWA), 99–119 (YVWLILLSILWMGTIGFIDDY), 140–160 (VSLGLFIGFYTRFDPAFSVLL), 171–191 (LMIDYGWWYIPVVVFIITAVS), 202–222 (GLAAGTSGIVVFGLGGFAYLT), 239–259 (GGEVAVVSMAIVMACVGFLWF), 266–286 (IFMGDTGSLALGSAIAVIALL), 291–311 (LLLPVLAGTFLLETLSVSLQV), and 346–366 (KIVIRFWIITLLFFLASLMTL).

It belongs to the glycosyltransferase 4 family. MraY subfamily. Mg(2+) serves as cofactor.

The protein localises to the cell inner membrane. It carries out the reaction UDP-N-acetyl-alpha-D-muramoyl-L-alanyl-gamma-D-glutamyl-meso-2,6-diaminopimeloyl-D-alanyl-D-alanine + di-trans,octa-cis-undecaprenyl phosphate = di-trans,octa-cis-undecaprenyl diphospho-N-acetyl-alpha-D-muramoyl-L-alanyl-D-glutamyl-meso-2,6-diaminopimeloyl-D-alanyl-D-alanine + UMP. It functions in the pathway cell wall biogenesis; peptidoglycan biosynthesis. In terms of biological role, catalyzes the initial step of the lipid cycle reactions in the biosynthesis of the cell wall peptidoglycan: transfers peptidoglycan precursor phospho-MurNAc-pentapeptide from UDP-MurNAc-pentapeptide onto the lipid carrier undecaprenyl phosphate, yielding undecaprenyl-pyrophosphoryl-MurNAc-pentapeptide, known as lipid I. This Chlorobium phaeobacteroides (strain BS1) protein is Phospho-N-acetylmuramoyl-pentapeptide-transferase.